The primary structure comprises 859 residues: Glucans biosynthesis glucosyltransferase H (859 aa).

The next 6 helical transmembrane spans lie at 144-166 (YILL…GILP), 200-222 (LLLF…MGFL), 523-545 (VMSY…LLAV), 573-595 (VALF…ILIW), 608-630 (VTVS…MLFH), and 684-706 (SFLW…SVIS).

The protein belongs to the glycosyltransferase 2 family. OpgH subfamily.

The protein resides in the cell inner membrane. It participates in glycan metabolism; osmoregulated periplasmic glucan (OPG) biosynthesis. Functionally, involved in the biosynthesis of osmoregulated periplasmic glucans (OPGs). The chain is Glucans biosynthesis glucosyltransferase H from Pseudomonas syringae pv. tomato (strain ATCC BAA-871 / DC3000).